The chain runs to 506 residues: D-alanine--D-alanyl carrier protein ligase (506 aa).

152–153 lines the ATP pocket; it reads TS. Position 197 (aspartate 197) interacts with D-alanine. An ATP-binding site is contributed by 292 to 297; sequence NTYGPT. Valine 301 contributes to the D-alanine binding site. ATP contacts are provided by residues aspartate 383, 395-398, and lysine 494; that span reads YRGR. Lysine 494 contacts D-alanine.

The protein belongs to the ATP-dependent AMP-binding enzyme family. DltA subfamily.

The protein localises to the cytoplasm. The enzyme catalyses holo-[D-alanyl-carrier protein] + D-alanine + ATP = D-alanyl-[D-alanyl-carrier protein] + AMP + diphosphate. It participates in cell wall biogenesis; lipoteichoic acid biosynthesis. Catalyzes the first step in the D-alanylation of lipoteichoic acid (LTA), the activation of D-alanine and its transfer onto the D-alanyl carrier protein (Dcp) DltC. In an ATP-dependent two-step reaction, forms a high energy D-alanyl-AMP intermediate, followed by transfer of the D-alanyl residue as a thiol ester to the phosphopantheinyl prosthetic group of the Dcp. D-alanylation of LTA plays an important role in modulating the properties of the cell wall in Gram-positive bacteria, influencing the net charge of the cell wall. This Lacticaseibacillus rhamnosus (Lactobacillus rhamnosus) protein is D-alanine--D-alanyl carrier protein ligase.